Reading from the N-terminus, the 642-residue chain is Threonine--tRNA ligase (642 aa).

The TGS domain occupies 1–61 (MPVITLPDGS…ENDAQLSIIT (61 aa)). The segment at 243–534 (DHRKIGKQLD…LTEEFAGFFP (292 aa)) is catalytic. The residue at position 286 (lysine 286) is an N6-acetyllysine. Residues cysteine 334, histidine 385, and histidine 511 each contribute to the Zn(2+) site.

It belongs to the class-II aminoacyl-tRNA synthetase family. In terms of assembly, homodimer. Zn(2+) is required as a cofactor.

It is found in the cytoplasm. It carries out the reaction tRNA(Thr) + L-threonine + ATP = L-threonyl-tRNA(Thr) + AMP + diphosphate + H(+). Its function is as follows. Catalyzes the attachment of threonine to tRNA(Thr) in a two-step reaction: L-threonine is first activated by ATP to form Thr-AMP and then transferred to the acceptor end of tRNA(Thr). Also edits incorrectly charged L-seryl-tRNA(Thr). The chain is Threonine--tRNA ligase from Escherichia coli O8 (strain IAI1).